Consider the following 349-residue polypeptide: ATPase GET3 (349 aa).

Residue 26 to 33 (KGGVGKTT) participates in ATP binding. Asp57 is an active-site residue. Glu240 and Asn267 together coordinate ATP. Residues Cys280 and Cys283 each coordinate Zn(2+).

Belongs to the arsA ATPase family. Homodimer. Component of the Golgi to ER traffic (GET) complex, which is composed of GET1, GET2 and GET3. Within the complex, GET1 and GET2 form a heterotetramer which is stabilized by phosphatidylinositol binding and which binds to the GET3 homodimer. Interacts with the chloride channel protein GEF1.

The protein resides in the cytoplasm. The protein localises to the endoplasmic reticulum. Its subcellular location is the golgi apparatus. Its function is as follows. ATPase required for the post-translational delivery of tail-anchored (TA) proteins to the endoplasmic reticulum. Recognizes and selectively binds the transmembrane domain of TA proteins in the cytosol. This complex then targets to the endoplasmic reticulum by membrane-bound receptors GET1 and GET2, where the tail-anchored protein is released for insertion. This process is regulated by ATP binding and hydrolysis. ATP binding drives the homodimer towards the closed dimer state, facilitating recognition of newly synthesized TA membrane proteins. ATP hydrolysis is required for insertion. Subsequently, the homodimer reverts towards the open dimer state, lowering its affinity for the GET1-GET2 receptor, and returning it to the cytosol to initiate a new round of targeting. Cooperates with the HDEL receptor ERD2 to mediate the ATP-dependent retrieval of resident ER proteins that contain a C-terminal H-D-E-L retention signal from the Golgi to the ER. Involved in low-level resistance to the oxyanions arsenite and arsenate, and in heat tolerance. The protein is ATPase GET3 of Kluyveromyces lactis (strain ATCC 8585 / CBS 2359 / DSM 70799 / NBRC 1267 / NRRL Y-1140 / WM37) (Yeast).